We begin with the raw amino-acid sequence, 405 residues long: L-carnitine CoA-transferase (405 aa).

CoA is bound by residues lysine 97 and arginine 104. Residue aspartate 169 is the Nucleophile of the active site.

Belongs to the CoA-transferase III family. CaiB subfamily. In terms of assembly, homodimer.

Its subcellular location is the cytoplasm. It carries out the reaction crotonobetainyl-CoA + (R)-carnitine = crotonobetaine + (R)-carnitinyl-CoA. It catalyses the reaction 4-(trimethylamino)butanoyl-CoA + (R)-carnitine = (R)-carnitinyl-CoA + 4-(trimethylamino)butanoate. Its pathway is amine and polyamine metabolism; carnitine metabolism. Functionally, catalyzes the reversible transfer of the CoA moiety from gamma-butyrobetainyl-CoA to L-carnitine to generate L-carnitinyl-CoA and gamma-butyrobetaine. Is also able to catalyze the reversible transfer of the CoA moiety from gamma-butyrobetainyl-CoA or L-carnitinyl-CoA to crotonobetaine to generate crotonobetainyl-CoA. The sequence is that of L-carnitine CoA-transferase from Shigella flexneri serotype 5b (strain 8401).